A 313-amino-acid chain; its full sequence is PDCD10 and GCKIII kinases-associated protein 1 (313 aa).

The segment at 42–95 is disordered; sequence KGTQNSEVEVPGSTLHSGSLSKPDSSGSTTGLPCQGSLTQEDSEERPCVEKHGI. Positions 58 to 69 are enriched in low complexity; the sequence is SGSLSKPDSSGS. At Ser60 the chain carries Phosphoserine. A compositionally biased stretch (polar residues) spans 70-81; the sequence is TTGLPCQGSLTQ. Thr104 is subject to Phosphothreonine. Residues Ser107, Ser237, and Ser240 each carry the phosphoserine modification. A disordered region spans residues 253–288; the sequence is YFKEEDPTQPTPVADPGNEREDPHTYNGNKEGAVVD.

Interacts with KEAP1; this interaction prevents the ubiquitination of KEAP1 by TRIM25, thus protecting KEAP1 from degradation. Found in association with PDCD10 and members of the STE20 kinases, such as STK24, STK25, and STK26.

The protein localises to the cell membrane. Acts as a tumor suppressor. Acts as a tumor suppressor for colorectal cancer cell proliferation by targeting KEAP1/USP17/ELK1/CDK6 axis. The chain is PDCD10 and GCKIII kinases-associated protein 1 from Rattus norvegicus (Rat).